The following is a 244-amino-acid chain: High affinity immunoglobulin epsilon receptor subunit beta (244 aa).

Topologically, residues 1 to 59 (MDTESNRRANLALPQEPSSVPAFEVLEISPQEVSSGRLLKSASSPPLHTWLTVLKKEQE) are cytoplasmic. Residues 60–79 (FLGVTQILTAMICLCFGTVV) traverse the membrane as a helical segment. Over 80-97 (CSVLDISHIEGDIFSSFK) the chain is Extracellular. A helical transmembrane segment spans residues 98-117 (AGYPFWGAIFFSISGMLSII). The Cytoplasmic portion of the chain corresponds to 118–130 (SERRNATYLVRGS). A helical membrane pass occupies residues 131-150 (LGANTASSIAGGTGITILII). Residues 151–180 (NLKKSLAYIHIHSCQKFFETKCFMASFSTE) are Extracellular-facing. The chain crosses the membrane as a helical span at residues 181 to 200 (IVVMMLFLTILGLGSAVSLT). Over 201–244 (ICGAGEELKGNKVPEDRVYEELNIYSATYSELEDPGEMSPPIDL) the chain is Cytoplasmic. Phosphotyrosine is present on residues Tyr219 and Tyr225. Ser226 carries the phosphoserine modification. At Tyr229 the chain carries Phosphotyrosine.

Belongs to the MS4A family. As to quaternary structure, tetramer of an alpha chain, a beta chain, and two disulfide linked gamma chains. Binds LILRB1. Interacts with FGR, FES/FPS and LYN. Post-translationally, phosphorylated on tyrosine residues by LYN. Found on the surface of mast cells and basophils.

It is found in the membrane. In terms of biological role, high affinity receptor that binds to the Fc region of immunoglobulins epsilon. Aggregation of FCER1 by multivalent antigens is required for the full mast cell response, including the release of preformed mediators (such as histamine) by degranulation and de novo production of lipid mediators and cytokines. Also mediates the secretion of important lymphokines. Binding of allergen to receptor-bound IgE leads to cell activation and the release of mediators responsible for the manifestations of allergy. This is High affinity immunoglobulin epsilon receptor subunit beta (MS4A2) from Homo sapiens (Human).